The primary structure comprises 913 residues: MTELTFFPTDWRSEDVEPDKGEPYFRINIFGKTMDGKTVCVRAKFTPFFLLETPESWSAARTNLFITETAMKYDAIRPSCLPTKRKNMWGYDGGKMRPMVQFVFKTLSQMRKAKYRLKNEYQIYESSVDPIIRIFHLRNINPADWMHVSKAFPVETRISNSDIEVETSFQHLGPSDLKEVPPLIIASWDIETYSKDRKFPLAENPADYCIQIATTFQKYGEPEPYRRVVVCYKQTASVEGVEIISCAEEADVMNTWMTILQDEITDVSIGYNLWQYDLRYIHGRSMMCVDDITGEDNVRLKNLGRLLVGGGEVIERDLSSNAFGQNKFFLLDMPGVMQIDLLQWFRKNRNLESYSLNNVSKLYLGDQKNDLPAMQIFEKFEGGADDRAIIAAYARKDTDLPLKLLKKMAILEDITEMANAVKVPVDYINFRGQQVRAFSCLVGKARQMNYAIPDDKMWTVDGKYEGATVLDAKKGAYFTSIAALDFASLYPSIIRAHNMSPETLVMDKRFENLPGIEYYEIETGLGTFKYPQKNDETGEGQGVVPALLDDLAKFRKQAKKHMAEAKKNDDEFREALYDAQQRSYKIVMNSVYGFLGASRGFIPCVPIAASVTATGRKMIEHTAKRVTELLPGSEVIYGDTDSVMIRMKLPDDKIHDMDEQFKMAKWLAGEITKDFKAPNDLEFEKIYYPYILYSKKRYAAIKFEDPDEKGKVDVKGLALVRRDFSPITREILKESLDTILFKKDTPTAVTETVECIRKVLDNEYPMEKFTMSKTLKTGYKNECQPHLHVSNKIFERTGFPVPSGARVPFVYIEDKKNLDTKQSFRAEDPTFAQENDLIVDRLFYIEHQLMKPICSLFEPLLDDPETEIFGHPLIKGKIDELKSTFKADLRDAKRTKKNIANNQREITSFFKKK.

Residues 182–401 (PLIIASWDIE…AYARKDTDLP (220 aa)) form a contains conserved residues essential for 3' -&gt; 5' exonuclease activities region.

Belongs to the DNA polymerase type-B family.

The enzyme catalyses DNA(n) + a 2'-deoxyribonucleoside 5'-triphosphate = DNA(n+1) + diphosphate. Its function is as follows. In addition to polymerase activity, this DNA polymerase potentially exhibits 3' to 5' exonuclease activity. This chain is DNA polymerase (DPO), found in Chlorella (PBCV-NY2A).